Reading from the N-terminus, the 282-residue chain is Small ribosomal subunit protein uS3 (282 aa).

The 69-residue stretch at 43-111 folds into the KH type-2 domain; sequence IRRLMSKGME…QVQLNILEVK (69 aa). The disordered stretch occupies residues 217–282; that stretch reads AQSQAAAPRA…IGKGSNGTEA (66 aa). The segment covering 228–240 has biased composition (basic and acidic residues); the sequence is RRNERGDRPDRGA. The segment covering 256–269 has biased composition (low complexity); it reads AVATGSAPTGTAAT.

Belongs to the universal ribosomal protein uS3 family. As to quaternary structure, part of the 30S ribosomal subunit. Forms a tight complex with proteins S10 and S14.

Functionally, binds the lower part of the 30S subunit head. Binds mRNA in the 70S ribosome, positioning it for translation. In Kineococcus radiotolerans (strain ATCC BAA-149 / DSM 14245 / SRS30216), this protein is Small ribosomal subunit protein uS3.